Reading from the N-terminus, the 292-residue chain is Glutamate racemase (292 aa).

Substrate is bound by residues 28–29 (DS) and 60–61 (YG). The Proton donor/acceptor role is filled by Cys-91. 92 to 93 (NT) provides a ligand contact to substrate. The Proton donor/acceptor role is filled by Cys-200. 201 to 202 (TH) contributes to the substrate binding site.

It belongs to the aspartate/glutamate racemases family.

It carries out the reaction L-glutamate = D-glutamate. The protein operates within cell wall biogenesis; peptidoglycan biosynthesis. In terms of biological role, provides the (R)-glutamate required for cell wall biosynthesis. In Nostoc sp. (strain PCC 7120 / SAG 25.82 / UTEX 2576), this protein is Glutamate racemase.